We begin with the raw amino-acid sequence, 182 residues long: Isopentenyl-diphosphate Delta-isomerase (182 aa).

Mn(2+)-binding residues include histidine 25 and histidine 32. Residue cysteine 67 is part of the active site. Residue histidine 69 participates in Mn(2+) binding. Mg(2+) is bound at residue glutamate 87. Residues glutamate 114 and glutamate 116 each coordinate Mn(2+). Glutamate 116 is an active-site residue.

It belongs to the IPP isomerase type 1 family. In terms of assembly, homodimer. It depends on Mg(2+) as a cofactor. Mn(2+) serves as cofactor.

Its subcellular location is the cytoplasm. It catalyses the reaction isopentenyl diphosphate = dimethylallyl diphosphate. The protein operates within isoprenoid biosynthesis; dimethylallyl diphosphate biosynthesis; dimethylallyl diphosphate from isopentenyl diphosphate: step 1/1. Functionally, catalyzes the 1,3-allylic rearrangement of the homoallylic substrate isopentenyl (IPP) to its highly electrophilic allylic isomer, dimethylallyl diphosphate (DMAPP). The sequence is that of Isopentenyl-diphosphate Delta-isomerase from Escherichia coli (strain K12 / MC4100 / BW2952).